Consider the following 492-residue polypeptide: GTPase Der (492 aa).

2 consecutive EngA-type G domains span residues 3 to 167 and 201 to 381; these read FTLA…DAYA and LQVA…EVWN. GTP is bound by residues 9–16, 56–60, 119–122, 207–214, 259–263, and 324–327; these read GRPNVGKS, DTAGL, NKAE, GRPNAGKS, DTAGM, and NKWD. The region spanning 382 to 468 is the KH-like domain; the sequence is RRVTTAQLNR…RLWMRGQNDA (87 aa). Residues 462 to 492 are disordered; it reads MRGQNDANPYKGRKKAPPSKLRKHTDGRRKD. Basic residues predominate over residues 472–492; that stretch reads KGRKKAPPSKLRKHTDGRRKD.

It belongs to the TRAFAC class TrmE-Era-EngA-EngB-Septin-like GTPase superfamily. EngA (Der) GTPase family. As to quaternary structure, associates with the 50S ribosomal subunit.

In terms of biological role, GTPase that plays an essential role in the late steps of ribosome biogenesis. The polypeptide is GTPase Der (Roseobacter denitrificans (strain ATCC 33942 / OCh 114) (Erythrobacter sp. (strain OCh 114))).